Consider the following 172-residue polypeptide: uncharacterized protein (172 aa).

This is an uncharacterized protein from Agrobacterium tumefaciens (strain Ach5).